The following is a 97-amino-acid chain: Large ribosomal subunit protein bL28 (97 aa).

Belongs to the bacterial ribosomal protein bL28 family.

The sequence is that of Large ribosomal subunit protein bL28 from Rickettsia canadensis (strain McKiel).